The following is a 56-amino-acid chain: Large ribosomal subunit protein bL32 (56 aa).

Basic residues predominate over residues 1–20 (MAVPKRRTSRSNTRSRRSQW). A disordered region spans residues 1–24 (MAVPKRRTSRSNTRSRRSQWKAKV).

Belongs to the bacterial ribosomal protein bL32 family.

This is Large ribosomal subunit protein bL32 from Frankia casuarinae (strain DSM 45818 / CECT 9043 / HFP020203 / CcI3).